We begin with the raw amino-acid sequence, 218 residues long: LexA repressor (218 aa).

The segment at residues Arg28–Arg48 is a DNA-binding region (H-T-H motif). Residues Ser136 and Lys173 each act as for autocatalytic cleavage activity in the active site.

The protein belongs to the peptidase S24 family. As to quaternary structure, homodimer.

It catalyses the reaction Hydrolysis of Ala-|-Gly bond in repressor LexA.. Represses a number of genes involved in the response to DNA damage (SOS response), including recA and lexA. In the presence of single-stranded DNA, RecA interacts with LexA causing an autocatalytic cleavage which disrupts the DNA-binding part of LexA, leading to derepression of the SOS regulon and eventually DNA repair. The polypeptide is LexA repressor (Cupriavidus pinatubonensis (strain JMP 134 / LMG 1197) (Cupriavidus necator (strain JMP 134))).